Consider the following 130-residue polypeptide: Trypsin inhibitor (130 aa).

The tract at residues Leu27–Leu49 is disordered. The span at Arg32–Leu49 shows a compositional bias: low complexity.

Belongs to the 2S seed storage albumins family. In terms of assembly, the protein consists of two chains linked by disulfide bonds.

Functionally, inhibits trypsin with a Ki of 7 x 10(-6) M. The chain is Trypsin inhibitor from Mutarda arvensis (Charlock mustard).